A 198-amino-acid chain; its full sequence is Alkyl hydroperoxide reductase C (198 aa).

Positions 2–163 constitute a Thioredoxin domain; the sequence is TLVTQKAPNF…MIRMIDALNF (162 aa). Cys-50 acts as the Cysteine sulfenic acid (-SOH) intermediate in catalysis.

The protein belongs to the peroxiredoxin family. AhpC/Prx1 subfamily. As to quaternary structure, homodimer; disulfide-linked, upon oxidation. 5 homodimers assemble to form a ring-like decamer.

The protein resides in the cytoplasm. The catalysed reaction is a hydroperoxide + NADH + H(+) = an alcohol + NAD(+) + H2O. In terms of biological role, thiol-specific peroxidase that catalyzes the reduction of hydrogen peroxide and organic hydroperoxides to water and alcohols, respectively. Plays a role in cell protection against oxidative stress by detoxifying peroxides. The protein is Alkyl hydroperoxide reductase C of Buchnera aphidicola subsp. Schizaphis graminum (strain Sg).